We begin with the raw amino-acid sequence, 210 residues long: Orotate phosphoribosyltransferase (210 aa).

Residues Arg-94, Lys-98, His-100, and 120–128 each bind 5-phospho-alpha-D-ribose 1-diphosphate; that span reads EDLISTGGS. Ser-124 serves as a coordination point for orotate.

The protein belongs to the purine/pyrimidine phosphoribosyltransferase family. PyrE subfamily. Homodimer. The cofactor is Mg(2+).

The enzyme catalyses orotidine 5'-phosphate + diphosphate = orotate + 5-phospho-alpha-D-ribose 1-diphosphate. The protein operates within pyrimidine metabolism; UMP biosynthesis via de novo pathway; UMP from orotate: step 1/2. Its function is as follows. Catalyzes the transfer of a ribosyl phosphate group from 5-phosphoribose 1-diphosphate to orotate, leading to the formation of orotidine monophosphate (OMP). In Bacillus cereus (strain ATCC 10987 / NRS 248), this protein is Orotate phosphoribosyltransferase.